A 207-amino-acid polypeptide reads, in one-letter code: Large ribosomal subunit protein uL4 (207 aa).

The segment at Thr48 to Gln75 is disordered. The segment covering Gly60 to Gly71 has biased composition (basic residues).

Belongs to the universal ribosomal protein uL4 family. As to quaternary structure, part of the 50S ribosomal subunit.

One of the primary rRNA binding proteins, this protein initially binds near the 5'-end of the 23S rRNA. It is important during the early stages of 50S assembly. It makes multiple contacts with different domains of the 23S rRNA in the assembled 50S subunit and ribosome. Its function is as follows. Forms part of the polypeptide exit tunnel. The sequence is that of Large ribosomal subunit protein uL4 from Staphylococcus carnosus (strain TM300).